The sequence spans 304 residues: MYYGLDIGGTKIELAVFNEELEKLYSERVPTPKTDYEEWLNTIVDLVNRADEKFGEVGTVGLGVPGFVNQQTGLAEITNIRVADNKPILRDLSVRLGREVRAENDANCFALSEAWDTENQQYPTVLGLILGTGFGGGFVLNGKVHSGQVGMAGELGHLQLNYHALKLLGWDNAPIYQCGCGNKACLDNYLSGRGFEMLYRDLKGETLSAREIIDLFYQGNESAVDFVNLFVELAAISIGNIITAFDPHMIVLGGGLSNFDYLYEALPKALPPHLMRTAKVPPIKKAKHGDSGGVRGAAALFLTK.

Residues 4 to 11 (GLDIGGTK) and 133 to 140 (GFGGGFVL) each bind ATP. His157, Cys178, Cys180, and Cys185 together coordinate Zn(2+).

Belongs to the ROK (NagC/XylR) family. NagK subfamily.

It catalyses the reaction N-acetyl-D-glucosamine + ATP = N-acetyl-D-glucosamine 6-phosphate + ADP + H(+). Its pathway is cell wall biogenesis; peptidoglycan recycling. Its function is as follows. Catalyzes the phosphorylation of N-acetyl-D-glucosamine (GlcNAc) derived from cell-wall degradation, yielding GlcNAc-6-P. The polypeptide is N-acetyl-D-glucosamine kinase (Haemophilus influenzae (strain 86-028NP)).